A 93-amino-acid polypeptide reads, in one-letter code: Protein YzgL (93 aa).

In Escherichia coli (strain K12), this protein is Protein YzgL (yzgL).